The chain runs to 296 residues: Protoheme IX farnesyltransferase (296 aa).

A run of 9 helical transmembrane segments spans residues 9–29 (VTKP…FLLA), 36–56 (YPLF…GCVF), 75–95 (VLVK…VLGI), 99–119 (LLLY…GFVI), 133–153 (VYGT…GYCA), 163–183 (LILL…IAIF), 209–229 (ITLY…SGYA), 234–254 (LVVA…GYKA), and 265–285 (FVFS…DFNV).

The protein belongs to the UbiA prenyltransferase family. Protoheme IX farnesyltransferase subfamily.

The protein resides in the cell inner membrane. It catalyses the reaction heme b + (2E,6E)-farnesyl diphosphate + H2O = Fe(II)-heme o + diphosphate. It participates in porphyrin-containing compound metabolism; heme O biosynthesis; heme O from protoheme: step 1/1. Converts heme B (protoheme IX) to heme O by substitution of the vinyl group on carbon 2 of heme B porphyrin ring with a hydroxyethyl farnesyl side group. The protein is Protoheme IX farnesyltransferase of Yersinia pestis bv. Antiqua (strain Antiqua).